The primary structure comprises 867 residues: Ent-copalyl diphosphate synthase 1, chloroplastic (867 aa).

The transit peptide at 1–35 (MIHLHSPPTAPAAFGGAGSADWRRRRRWSWSSSSR) directs the protein to the chloroplast. Residues 1 to 134 (MIHLHSPPTA…ADEEADDELQ (134 aa)) are disordered. A compositionally biased stretch (basic and acidic residues) spans 51–64 (RGGDDGGGEDHHAD). Over residues 74–89 (AWRARATTAGVSSSSS) the composition is skewed to low complexity. Residues 99–121 (IEHETPRITKWPNESRDLDDHQQ) show a composition bias toward basic and acidic residues. Residues 124 to 133 (EADEEADDEL) are compositionally biased toward acidic residues. Lys286 provides a ligand contact to substrate. A DXDD motif motif is present at residues 418–421 (EVDD). Lys504 contributes to the substrate binding site.

The protein belongs to the terpene synthase family. Mg(2+) serves as cofactor.

It is found in the plastid. The protein resides in the chloroplast. The catalysed reaction is (2E,6E,10E)-geranylgeranyl diphosphate = ent-copalyl diphosphate. It functions in the pathway plant hormone biosynthesis; gibberellin biosynthesis. Functionally, catalyzes the conversion of geranylgeranyl diphosphate to the gibberellin precursor ent-copalyl diphosphate. This Oryza sativa subsp. japonica (Rice) protein is Ent-copalyl diphosphate synthase 1, chloroplastic (CPS1).